Reading from the N-terminus, the 182-residue chain is Large ribosomal subunit protein uL6 (182 aa).

Belongs to the universal ribosomal protein uL6 family. In terms of assembly, part of the 50S ribosomal subunit.

This protein binds to the 23S rRNA, and is important in its secondary structure. It is located near the subunit interface in the base of the L7/L12 stalk, and near the tRNA binding site of the peptidyltransferase center. In Haloquadratum walsbyi (strain DSM 16790 / HBSQ001), this protein is Large ribosomal subunit protein uL6.